A 349-amino-acid chain; its full sequence is tRNA uridine(34) hydroxylase (349 aa).

The region spanning 146 to 240 (DDPDAVFIDM…YARRAREQGL (95 aa)) is the Rhodanese domain. The active-site Cysteine persulfide intermediate is Cys200. Basic and acidic residues predominate over residues 316 to 328 (EEQRRRRAGRENG). Residues 316–349 (EEQRRRRAGRENGNKIFNKSRGRLNTKLGIPDPE) form a disordered region.

It belongs to the TrhO family.

It catalyses the reaction uridine(34) in tRNA + AH2 + O2 = 5-hydroxyuridine(34) in tRNA + A + H2O. In terms of biological role, catalyzes oxygen-dependent 5-hydroxyuridine (ho5U) modification at position 34 in tRNAs. In Enterobacter sp. (strain 638), this protein is tRNA uridine(34) hydroxylase.